Here is a 474-residue protein sequence, read N- to C-terminus: 3-isopropylmalate dehydratase large subunit (474 aa).

Positions 352, 413, and 416 each coordinate [4Fe-4S] cluster.

This sequence belongs to the aconitase/IPM isomerase family. LeuC type 1 subfamily. Heterodimer of LeuC and LeuD. [4Fe-4S] cluster is required as a cofactor.

It carries out the reaction (2R,3S)-3-isopropylmalate = (2S)-2-isopropylmalate. Its pathway is amino-acid biosynthesis; L-leucine biosynthesis; L-leucine from 3-methyl-2-oxobutanoate: step 2/4. Catalyzes the isomerization between 2-isopropylmalate and 3-isopropylmalate, via the formation of 2-isopropylmaleate. The chain is 3-isopropylmalate dehydratase large subunit from Pseudomonas savastanoi pv. phaseolicola (strain 1448A / Race 6) (Pseudomonas syringae pv. phaseolicola (strain 1448A / Race 6)).